The sequence spans 102 residues: Mini zinc finger protein 1 (102 aa).

Positions 1–13 are enriched in basic residues; the sequence is MMKKRQMVIKQRS. The segment at 1–34 is disordered; that stretch reads MMKKRQMVIKQRSRNSNTSSSWTTTSSSSSSSEI. The segment covering 14–32 has biased composition (low complexity); the sequence is RNSNTSSSWTTTSSSSSSS. A ZF-HD dimerization-type; degenerate zinc finger spans residues 39–88; that stretch reads YVECQKNHAANIGGYAVDGCREFMAAGVEGTVDALRCAACGCHRNFHRKE.

In terms of assembly, homo- and heterodimers. Interacts with ZHD1, ZHD5, ZHD6, ZHD7, ZHD8, ZHD10 and ZHD13. Mostly expressed in roots and stems, present in siliques and seedlings, and weakly observed in petioles, leaves and flowers.

The protein resides in the cytoplasm. Its function is as follows. Inhibits zinc finger homeodomain (ZHD) transcription factors, such as ZHD5, by interacting with them to prevent both their nuclear localization and their DNA-binding properties. Involved in integrating signals from multiple hormones by preventing the expression of genes involved in gibberellic acid (GA), auxin and brassinosteroid signaling and by promoting the expression of abscisic acid (ABA)-responsive genes. Regulates several development aspects, including photomorphogenesis, apical dominance, longevity, flower morphology and fertility, as well as root and stem elongation. Promotes the formation of ectopic shoot meristems on leaf margins. The sequence is that of Mini zinc finger protein 1 (MIF1) from Arabidopsis thaliana (Mouse-ear cress).